A 594-amino-acid chain; its full sequence is Probable glucose transporter rco-3 (594 aa).

The Cytoplasmic segment spans residues 1–13 (MAIFAMGWQKPDN). Residues 14–34 (VAGSSAPAIMVGLFVATGGLL) form a helical membrane-spanning segment. Residues 35–73 (LGYDTGTINGILAMKSFKDHFSTGYIDGNGQPGIYPKES) lie on the Extracellular side of the membrane. Residues 74–94 (ALIVAMLSAGTAIGALLAAPL) traverse the membrane as a helical segment. Over 95-103 (GDHYGRRRS) the chain is Cytoplasmic. A helical membrane pass occupies residues 104–124 (LIGAIGIFVIGAILQVCAYNI). Position 125 (D125) is a topological domain, extracellular. A helical transmembrane segment spans residues 126-146 (LLVAGRTVAGVGIGIVSVLVP). At 147–159 (LYQSEMAPKWIRG) the chain is on the cytoplasmic side. A helical transmembrane segment spans residues 160–180 (TLVCTYQLSITMGLLAAAVVN). Residues 181 to 193 (ILTYKLKTAAAYR) are Extracellular-facing. A helical membrane pass occupies residues 194–214 (VPIGLQLTWACVLALGLTVLP). At 215–293 (ETPRYLIKRG…TGCCLQMLQQ (79 aa)) the chain is on the cytoplasmic side. The chain crosses the membrane as a helical span at residues 294–314 (LTGVNFIMYYGTTFFNNAGVG). At 315-318 (NPFK) the chain is on the extracellular side. A helical membrane pass occupies residues 319–339 (ISLIMQVINTASTIPGLFVVE). Residues 340 to 345 (SWGRRR) lie on the Cytoplasmic side of the membrane. Residues 346–366 (LLMVGAIGMAICQLLIAAFAT) form a helical membrane-spanning segment. The Extracellular portion of the chain corresponds to 367–378 (ASGSNNLSAQNK). The N-linked (GlcNAc...) asparagine glycan is linked to N372. A helical transmembrane segment spans residues 379–403 (VLITFVAIYIFFFAASWGPVVWVVT). Residues 404–415 (SEIYPLKVRAKS) are Cytoplasmic-facing. A helical membrane pass occupies residues 416 to 436 (MSITTASNWFLNFGIAYGTPY). The Extracellular portion of the chain corresponds to 437 to 454 (MQTNSAASDESSIDLGSK). The helical transmembrane segment at 455–475 (VFFVWGAFCIVAVGFVWCMVY) threads the bilayer. Residues 476–594 (ETSKISLEQI…ASLGNIDLSY (119 aa)) are Cytoplasmic-facing. The tract at residues 512-594 (DLGFSDGGIP…ASLGNIDLSY (83 aa)) is disordered. Low complexity predominate over residues 524-576 (QQLQQQPQQPQQQQQQHHQQQQHQLQVDLQQSQSRTSNSSTSQTDTGGSNNTG).

The protein belongs to the major facilitator superfamily. Sugar transporter (TC 2.A.1.1) family.

It localises to the membrane. In terms of biological role, probable glucose transporter. Involved in sugar transport, carbon catabolite repression, and initiation of conidiophore development. The chain is Probable glucose transporter rco-3 (rco-3) from Neurospora crassa (strain ATCC 24698 / 74-OR23-1A / CBS 708.71 / DSM 1257 / FGSC 987).